A 124-amino-acid polypeptide reads, in one-letter code: UPF0235 protein (124 aa).

Positions 1 to 22 (MTKKGSSNSSKQQQQQQQIIIN) are disordered.

The protein belongs to the UPF0235 family.

The sequence is that of UPF0235 protein from Dictyostelium discoideum (Social amoeba).